The chain runs to 124 residues: Large ribosomal subunit protein eL33 (124 aa).

A2 is modified (N-acetylalanine).

It belongs to the eukaryotic ribosomal protein eL33 family.

The chain is Large ribosomal subunit protein eL33 from Caenorhabditis elegans.